Consider the following 169-residue polypeptide: Putative hydrolase 111R (169 aa).

Positions 46-169 (FEKRKAGVFV…QKILMALSCN (124 aa)) constitute a Nudix hydrolase domain. A Nudix box motif is present at residues 76 to 98 (GHMEAYDHSPKTCAERELKEETG). Glu-92, Glu-96, and Asp-138 together coordinate Mg(2+).

It belongs to the Nudix hydrolase family. Requires Mg(2+) as cofactor. Mn(2+) serves as cofactor.

This Aedes vexans (Inland floodwater mosquito) protein is Putative hydrolase 111R.